The following is a 494-amino-acid chain: Probable cytosol aminopeptidase (494 aa).

Positions 260 and 265 each coordinate Mn(2+). Residue Lys272 is part of the active site. The Mn(2+) site is built by Asp283, Asp342, and Glu344. Residue Arg346 is part of the active site.

It belongs to the peptidase M17 family. It depends on Mn(2+) as a cofactor.

The protein localises to the cytoplasm. It carries out the reaction Release of an N-terminal amino acid, Xaa-|-Yaa-, in which Xaa is preferably Leu, but may be other amino acids including Pro although not Arg or Lys, and Yaa may be Pro. Amino acid amides and methyl esters are also readily hydrolyzed, but rates on arylamides are exceedingly low.. The catalysed reaction is Release of an N-terminal amino acid, preferentially leucine, but not glutamic or aspartic acids.. Presumably involved in the processing and regular turnover of intracellular proteins. Catalyzes the removal of unsubstituted N-terminal amino acids from various peptides. This is Probable cytosol aminopeptidase from Bacillus cereus (strain Q1).